The chain runs to 147 residues: Globin, major monomeric component (147 aa).

The region spanning 1–146 is the Globin domain; the sequence is GLSAAQRQVI…ISGALISGLQ (146 aa). Histidine 90 is a heme b binding site.

This sequence belongs to the globin family. As to quaternary structure, monomer.

The polypeptide is Globin, major monomeric component (Glycera dibranchiata (Bloodworm)).